We begin with the raw amino-acid sequence, 253 residues long: Matrix protein (253 aa).

The tract at residues 1-26 (MLSRIKQGIKTKRSSSSSSSRSKTGD) is disordered. The short motif at 55 to 58 (PTAP) is the PTAP/PSAP motif element.

As to quaternary structure, homomultimer. Interacts with viral nucleocapsid. Interacts with host TSG101.

It is found in the virion membrane. It localises to the host endomembrane system. The protein localises to the host nucleus membrane. Its function is as follows. Plays a major role in assembly and budding of virion, by recruiting cellular partners of the ESCRT complexes that play a key role in releasing the budding particle from the host membrane. Condensates the ribonucleocapsid core during virus assembly. The polypeptide is Matrix protein (M) (Bos taurus (Bovine)).